A 457-amino-acid chain; its full sequence is Metal tolerance protein C4 (457 aa).

Residues 1-115 (MQSSHRILSR…IEINDQHSQR (115 aa)) lie on the Cytoplasmic side of the membrane. Residues 116–136 (AVTTALWCNFLVFSLKFGVWW) traverse the membrane as a helical segment. Residues 137–141 (TSSSH) lie on the Vacuolar side of the membrane. The helical transmembrane segment at 142–162 (VIMAEVVHSVADFANQALLAY) threads the bilayer. Residues 163–183 (GLSSSRRAPDALHPYGYSKER) lie on the Cytoplasmic side of the membrane. The chain crosses the membrane as a helical span at residues 184–204 (FVWSLISAVGIFCLGSGATIV). At 205 to 220 (NGVQNLWTSSPPPNME) the chain is on the vacuolar side. A helical membrane pass occupies residues 221 to 241 (LAAVVIGGSFLIEGASLLVAI). At 242 to 267 (QSVKKGAAQEGMTIRDYIWRGHDPTS) the chain is on the cytoplasmic side. A helical transmembrane segment spans residues 268–288 (VAVMTEDGAAVAGLAIAAASL). Topologically, residues 289 to 297 (VAVRMTGNP) are vacuolar. A helical transmembrane segment spans residues 298–318 (IYDPIGSIVVGNLLGMVAIFL). At 319–457 (IQRNRHALIG…HNPTPTDPSL (139 aa)) the chain is on the cytoplasmic side.

The protein belongs to the cation diffusion facilitator (CDF) transporter (TC 2.A.4) family.

It is found in the vacuole membrane. Functionally, involved in sequestration of excess metal in the cytoplasm into vacuoles to maintain metal homeostasis. The chain is Metal tolerance protein C4 (MTPC4) from Arabidopsis thaliana (Mouse-ear cress).